Here is a 433-residue protein sequence, read N- to C-terminus: Hps1-dma1 cluster O-methyltransferase (433 aa).

The segment at 36-55 (NGHPERSLNSTDSVRLSDAP) is disordered. S-adenosyl-L-methionine is bound at residue D285. H331 acts as the Proton acceptor in catalysis.

It belongs to the class I-like SAM-binding methyltransferase superfamily. Cation-independent O-methyltransferase family. COMT subfamily.

It participates in secondary metabolite biosynthesis. Functionally, O-methyltransferase; part of the hps1-dma1 gene cluster that probably mediates the biosynthesis a derivative of cyclopiazonic acid (CPA). The hybrid polyketide synthase-nonribosomal peptide synthetase (PKS-NRPS) nps1 might incorporates acetyl-CoA, malonyl-CoA, and tryptophan (Trp) and utilizes a C-terminal redox-incompetent reductase domain to make and release the tryptophan tetramic acid, cyclo-acetoacetyl-L-tryptophan (c-AATrp), as the first intermediate in the pathway. In addition, the cluster also includes the tryptophan dimethylallyltransferase dma1, the FAD-dependent oxidoreductase toxD, the cytochrome P450 monooxygenase cyp3.1 and the methyltransferase DOTSEDRAFT_139328; the latter 2 being not present in all CPA-producing fungi but involved in additional modifications that occur in biosynthesis the of a range of CPA and CPA-like products. Further studies are required to clarify whether the CPA-like hps1-dma1 cluster is functional or a non-functional relic reflecting evolution of D.septosporum. This Dothistroma septosporum (strain NZE10 / CBS 128990) (Red band needle blight fungus) protein is Hps1-dma1 cluster O-methyltransferase.